The chain runs to 297 residues: Protoheme IX farnesyltransferase (297 aa).

The next 9 helical transmembrane spans lie at V16 to P36, V45 to L65, V93 to I113, T114 to K134, I141 to G161, S172 to F192, V223 to L243, G244 to P264, and I277 to L297.

It belongs to the UbiA prenyltransferase family. Protoheme IX farnesyltransferase subfamily.

Its subcellular location is the cell inner membrane. It carries out the reaction heme b + (2E,6E)-farnesyl diphosphate + H2O = Fe(II)-heme o + diphosphate. Its pathway is porphyrin-containing compound metabolism; heme O biosynthesis; heme O from protoheme: step 1/1. In terms of biological role, converts heme B (protoheme IX) to heme O by substitution of the vinyl group on carbon 2 of heme B porphyrin ring with a hydroxyethyl farnesyl side group. The polypeptide is Protoheme IX farnesyltransferase (Stenotrophomonas maltophilia (strain R551-3)).